The following is a 76-amino-acid chain: MSIEERVKKIIVEQLGVKEDDVKPEASFIEDLGADSLDTVELVMALEEEFDIEIPDEEAEKITTVQSAIDYVQNNQ.

Residues 1–76 (MSIEERVKKI…SAIDYVQNNQ (76 aa)) enclose the Carrier domain. Serine 36 is modified (O-(pantetheine 4'-phosphoryl)serine).

It belongs to the acyl carrier protein (ACP) family. 4'-phosphopantetheine is transferred from CoA to a specific serine of apo-ACP by AcpS. This modification is essential for activity because fatty acids are bound in thioester linkage to the sulfhydryl of the prosthetic group.

It localises to the cytoplasm. Its pathway is lipid metabolism; fatty acid biosynthesis. Functionally, carrier of the growing fatty acid chain in fatty acid biosynthesis. The sequence is that of Acyl carrier protein from Histophilus somni (strain 129Pt) (Haemophilus somnus).